Reading from the N-terminus, the 85-residue chain is MEERNLRKTRVGVVVSDKMDKTIVVAVRDNVRHPLYNKIVKKTYKLKAHDEKNDAKIGDTVRVMETRPLSKDKRWRLVEIMERAK.

Belongs to the universal ribosomal protein uS17 family. As to quaternary structure, part of the 30S ribosomal subunit.

One of the primary rRNA binding proteins, it binds specifically to the 5'-end of 16S ribosomal RNA. In Agathobacter rectalis (strain ATCC 33656 / DSM 3377 / JCM 17463 / KCTC 5835 / VPI 0990) (Eubacterium rectale), this protein is Small ribosomal subunit protein uS17.